Reading from the N-terminus, the 20-residue chain is Small ribosomal subunit protein bS20 (20 aa).

It belongs to the bacterial ribosomal protein bS20 family.

Functionally, binds directly to 16S ribosomal RNA. This is Small ribosomal subunit protein bS20 (rpsT) from Brevundimonas diminuta (Pseudomonas diminuta).